We begin with the raw amino-acid sequence, 158 residues long: Chromobox protein homolog 7 (158 aa).

Residues 11-69 (FAVESIRKKRVRKGKVEYLVKWKGWPPKYSTWEPEEHILDPRLVMAYEEKEEKDRASGY) enclose the Chromo domain. Residues 60 to 124 (KEEKDRASGY…PPPWTPMLPS (65 aa)) are disordered. Positions 68–78 (GYRKRGPKPKR) are enriched in basic residues.

As to quaternary structure, component of a PRC1-like complex. Distinct PRC1-like core complexes are composed of a RING1 subunit (RING1B or RING1A), one of the six PCGF proteins (PCGF1-6), one PHC protein (PHC1-3) and one of the CBX proteins (CBX2, CBX4, CBX6, CBX7 or CBX8). The composition of the PRC1 complex may differ between the PRC1 complex in pluripotent embryonic stem cells containing RNF2, CBX7 and PCGF2, and the PRC1 complex in differentiating cells containing RNF2, CBX2, CBX4 and BMI1. Interacts with RING1. Interacts with RNF2/RING1B. Interacts with PCGF1, PCGF2, PCGF3, PCGF5 and PCGF6. Interacts (via chromodomain) with histone H3K9Me3 and H3K27me3. Interacts with H3K9Me2 and H4K20Me1. Interacts (via chromodomain) with single-stranded and double-stranded RNA; RNA binding seems to be required for the localization to chromatin.

Its subcellular location is the nucleus. The protein resides in the chromosome. Functionally, component of a Polycomb group (PcG) multiprotein PRC1-like complex, a complex class required to maintain the transcriptionally repressive state of many genes, including Hox genes, throughout development. PcG PRC1 complex acts via chromatin remodeling and modification of histones; it mediates monoubiquitination of histone H2A 'Lys-119', rendering chromatin heritably changed in its expressibility. Promotes histone H3 trimethylation at 'Lys-9' (H3K9me3). Binds to histone H3 trimethylated 'Lys-9' (H3K9me3) or at 'Lys-27' (H3K27me3). May possibly also bind trimethylated lysine residues in other proteins (in vitro). Binds non-coding, single-stranded and double-stranded RNA. Plays a role in the timely repression of differentiation-specific genes in pluripotent embryonic stem cells to maintain the undifferentiated state. Regulator of cellular lifespan by maintaining the repression of CDKN2A, but not by inducing telomerase activity. This chain is Chromobox protein homolog 7 (Cbx7), found in Rattus norvegicus (Rat).